The chain runs to 504 residues: Endochitinase (504 aa).

Residues 1-22 (MNRTTLILFFIILSNTITVIHG) form the signal peptide. The GH18 domain maps to 23–392 (YVRGCYYTNW…NAISSELEGE (370 aa)). A disulfide bond links C27 and C52. Chitin-binding positions include 78-79 (TE) and 105-108 (GGYN). E148 serves as the catalytic Proton donor. Residues Y149, 212 to 215 (MSYD), and W362 each bind chitin. Residues 389–450 (LEGESENPEI…YDTDETEGQE (62 aa)) form a disordered region. Positions 396–408 (PEITTEEPSITET) are enriched in low complexity. A run of 2 repeats spans residues 407-420 (ETEA…EETS) and 421-434 (ETEA…EETS). Positions 407-448 (ETEAYETDETEETSETEAYDTDETEETSETEATTYDTDETEG) are 3 X 14 AA approximate tandem repeats of E-T-E-A-Y-[ED]-T-D-E-T-E-E-T-S. The span at 409–435 (EAYETDETEETSETEAYDTDETEETSE) shows a compositional bias: acidic residues. One copy of the 3; approximate repeat lies at 435–448 (ETEATTYDTDETEG). The region spanning 448 to 504 (GQECPERDGLFPHPTDCHLFIQCANNIAYVMQCPATTFFNDAIKVCDHMTNAPDTCI) is the Chitin-binding type-2 domain. A disulfide bridge links C480 with C493.

The protein belongs to the glycosyl hydrolase 18 family. Chitinase class II subfamily. O-glycosylated.

The enzyme catalyses Random endo-hydrolysis of N-acetyl-beta-D-glucosaminide (1-&gt;4)-beta-linkages in chitin and chitodextrins.. Functionally, microfilarial chitinase, which may function to degrade chitin-containing structures in the micro-filaria or in its mosquito vector during parasite development and transmission. The polypeptide is Endochitinase (Brugia malayi (Filarial nematode worm)).